Here is a 274-residue protein sequence, read N- to C-terminus: NH(3)-dependent NAD(+) synthetase (274 aa).

Residue 46 to 53 (GISGGQDS) participates in ATP binding. Asp52 is a Mg(2+) binding site. A deamido-NAD(+)-binding site is contributed by Arg140. Thr160 is a binding site for ATP. Glu165 serves as a coordination point for Mg(2+). Lys173 and Asp180 together coordinate deamido-NAD(+). 2 residues coordinate ATP: Lys189 and Thr211. 260-261 (HK) provides a ligand contact to deamido-NAD(+).

Belongs to the NAD synthetase family. In terms of assembly, homodimer.

It carries out the reaction deamido-NAD(+) + NH4(+) + ATP = AMP + diphosphate + NAD(+) + H(+). Its pathway is cofactor biosynthesis; NAD(+) biosynthesis; NAD(+) from deamido-NAD(+) (ammonia route): step 1/1. Catalyzes the ATP-dependent amidation of deamido-NAD to form NAD. Uses ammonia as a nitrogen source. The protein is NH(3)-dependent NAD(+) synthetase of Streptococcus pyogenes serotype M3 (strain ATCC BAA-595 / MGAS315).